A 157-amino-acid polypeptide reads, in one-letter code: Transcription elongation factor GreA (157 aa).

Positions 46–73 form a coiled coil; sequence AEYHSARERQSFIEGRIAELEEIISAAE.

It belongs to the GreA/GreB family.

Its function is as follows. Necessary for efficient RNA polymerase transcription elongation past template-encoded arresting sites. The arresting sites in DNA have the property of trapping a certain fraction of elongating RNA polymerases that pass through, resulting in locked ternary complexes. Cleavage of the nascent transcript by cleavage factors such as GreA or GreB allows the resumption of elongation from the new 3'terminus. GreA releases sequences of 2 to 3 nucleotides. In Acidiphilium cryptum (strain JF-5), this protein is Transcription elongation factor GreA.